The following is a 355-amino-acid chain: Zinc finger A20 and AN1 domain-containing stress-associated protein 3 (355 aa).

The A20-type zinc finger occupies 199 to 233 (AGQPVLCASGCGFYGNPATLDMCSVCYRQHCLLNG). Zn(2+)-binding residues include Cys-205, Cys-209, Cys-221, Cys-224, Cys-295, Cys-298, Cys-309, Cys-311, Cys-316, His-319, His-325, and Cys-327. The AN1-type zinc finger occupies 289 to 335 (KAPANRCASCKKKVGLLGFACRCGATYCGTHRYPEKHACGFDFKGAS).

Its function is as follows. May be involved in environmental stress response. This is Zinc finger A20 and AN1 domain-containing stress-associated protein 3 (SAP3) from Oryza sativa subsp. japonica (Rice).